Here is a 182-residue protein sequence, read N- to C-terminus: Functional amyloid subunit FapB (182 aa).

The signal sequence occupies residues 1–18 (MTHSWLLLTVLGCSAAMA). One copy of the FapB_R1 repeat lies at 22–58 (NQALIDNAGKQYTGVLSVNQAAGNQHQQINSRAISLG). A FapB_R2 repeat occupies 80–114 (SAAIQGSAFSNGNGILGVNQSAGANNQMINAVRIS). The stretch at 150–180 (SDQAFTGSRGVVQVNQSAGVGNRMANTLGVT) is one FapB_R3 repeat.

The protein belongs to the FapB/FapC family. As to quaternary structure, forms fibrils in vitro; in the presence of FapA the fibrils are slightly narrower. A minor component of purified amyloid fibrils. Fibrils are resistant to boiling in 2% (weight/vol) SDS and require &gt;90% (vol/vol) formic acid to dissolve.

The protein resides in the fimbrium. The protein localises to the secreted. In terms of biological role, a minor component of the functional amyloid in this bacterium. Probably nucleates fibril formation; FapB nucleates fibrillation its own, FapA inhibits FapB fibril elongation. Upon overexpression of the endogenous six-gene locus (fapA-fapF) in situ, cells form large clumps during liquid growth, make large amounts of biofilm and produce amyloid fibrils. Expression of the 6 gene operon in E.coli strain BL21(DE3) induces flocculation and biofilm formation with copious extracellular fibrils. This Pseudomonas fluorescens protein is Functional amyloid subunit FapB.